The primary structure comprises 532 residues: UDP-N-acetylmuramyl-tripeptide synthetase (532 aa).

A UDP-N-acetyl-alpha-D-muramoyl-L-alanyl-D-glutamate-binding site is contributed by serine 34. Residue 127-133 participates in ATP binding; the sequence is GTEGKSS. UDP-N-acetyl-alpha-D-muramoyl-L-alanyl-D-glutamate contacts are provided by residues 171–172, serine 198, and arginine 208; that span reads TT. N6-carboxylysine is present on lysine 240.

This sequence belongs to the MurCDEF family. MurE subfamily. Carboxylation is probably crucial for Mg(2+) binding and, consequently, for the gamma-phosphate positioning of ATP.

The protein localises to the cytoplasm. It participates in cell wall biogenesis; peptidoglycan biosynthesis. Its function is as follows. Catalyzes the addition of an amino acid to the nucleotide precursor UDP-N-acetylmuramoyl-L-alanyl-D-glutamate (UMAG) in the biosynthesis of bacterial cell-wall peptidoglycan. This Treponema denticola (strain ATCC 35405 / DSM 14222 / CIP 103919 / JCM 8153 / KCTC 15104) protein is UDP-N-acetylmuramyl-tripeptide synthetase.